Here is a 501-residue protein sequence, read N- to C-terminus: Protein DETOXIFICATION 37 (501 aa).

The next 12 membrane-spanning stretches (helical) occupy residues methionine 44 to isoleucine 64, leucine 84 to glycine 104, valine 134 to leucine 154, valine 163 to valine 183, serine 200 to tyrosine 220, leucine 222 to valine 242, alanine 280 to leucine 300, leucine 310 to alanine 330, valine 352 to tryptophan 372, phenylalanine 396 to glycine 416, phenylalanine 422 to leucine 442, and isoleucine 453 to leucine 473.

Belongs to the multi antimicrobial extrusion (MATE) (TC 2.A.66.1) family.

The protein resides in the membrane. In Arabidopsis thaliana (Mouse-ear cress), this protein is Protein DETOXIFICATION 37.